Here is a 957-residue protein sequence, read N- to C-terminus: Glycine dehydrogenase (decarboxylating) (957 aa).

Lys-708 is modified (N6-(pyridoxal phosphate)lysine).

The protein belongs to the GcvP family. In terms of assembly, the glycine cleavage system is composed of four proteins: P, T, L and H. Pyridoxal 5'-phosphate serves as cofactor.

The catalysed reaction is N(6)-[(R)-lipoyl]-L-lysyl-[glycine-cleavage complex H protein] + glycine + H(+) = N(6)-[(R)-S(8)-aminomethyldihydrolipoyl]-L-lysyl-[glycine-cleavage complex H protein] + CO2. In terms of biological role, the glycine cleavage system catalyzes the degradation of glycine. The P protein binds the alpha-amino group of glycine through its pyridoxal phosphate cofactor; CO(2) is released and the remaining methylamine moiety is then transferred to the lipoamide cofactor of the H protein. In Escherichia coli O1:K1 / APEC, this protein is Glycine dehydrogenase (decarboxylating).